A 207-amino-acid polypeptide reads, in one-letter code: MKIIHKGLVEYLPTFEAMKTFNANRTASTEDELWVVEHPPVFTQGLAGKPEHLLIRDDIPIVQIDRGGQITYHGPGQLVVYTMIDFKRRKTSVRNIVSALENSIIATLAEYGIEAAADPKRPGVYVGERKIASLGLRIKGGSVYHGLALNVNMDLSPFTHINPCGYAGMEMTQIADFVQPCPTPDEVAAKLTAHLETQFTPKADNNE.

The BPL/LPL catalytic domain maps to 27–203 (ASTEDELWVV…HLETQFTPKA (177 aa)). Substrate is bound by residues 66-73 (RGGQITYH), 133-135 (SLG), and 146-148 (GLA). The active-site Acyl-thioester intermediate is the Cys164.

This sequence belongs to the LipB family.

It localises to the cytoplasm. The catalysed reaction is octanoyl-[ACP] + L-lysyl-[protein] = N(6)-octanoyl-L-lysyl-[protein] + holo-[ACP] + H(+). It participates in protein modification; protein lipoylation via endogenous pathway; protein N(6)-(lipoyl)lysine from octanoyl-[acyl-carrier-protein]: step 1/2. In terms of biological role, catalyzes the transfer of endogenously produced octanoic acid from octanoyl-acyl-carrier-protein onto the lipoyl domains of lipoate-dependent enzymes. Lipoyl-ACP can also act as a substrate although octanoyl-ACP is likely to be the physiological substrate. In Neisseria meningitidis serogroup C / serotype 2a (strain ATCC 700532 / DSM 15464 / FAM18), this protein is Octanoyltransferase.